A 245-amino-acid chain; its full sequence is Probable 2-phosphosulfolactate phosphatase (245 aa).

Belongs to the ComB family. Requires Mg(2+) as cofactor.

The catalysed reaction is (2R)-O-phospho-3-sulfolactate + H2O = (2R)-3-sulfolactate + phosphate. In Trichormus variabilis (strain ATCC 29413 / PCC 7937) (Anabaena variabilis), this protein is Probable 2-phosphosulfolactate phosphatase.